The primary structure comprises 554 residues: Perforin-1 (554 aa).

An N-terminal signal peptide occupies residues 1 to 20; it reads MATCLFLLGLFLLLPRPVPA. 3 disulfide bridges follow: Cys-22–Cys-75, Cys-30–Cys-72, and Cys-101–Cys-175. The MACPF domain occupies 26–374; it reads TRSECKQKHK…HYIMSRARWQ (349 aa). Residues 128–148 form a beta stranded membrane-spanning segment; the sequence is WRVGLDVNPRPEANMRASVAG. The N-linked (GlcNAc...) asparagine glycan is linked to Asn-204. Cystine bridges form between Cys-241/Cys-407, Cys-376/Cys-392, Cys-380/Cys-394, and Cys-396/Cys-406. The beta stranded transmembrane segment at 256–278 threads the bilayer; sequence CLNVEAQVSIGAQASVSSEYKAC. Asn-375 carries N-linked (GlcNAc...) asparagine glycosylation. An EGF-like domain is found at 375 to 407; sequence NCSRPCRSGQHKSSHDSCQCECQDSKVTNQDCC. Residues 395 to 513 enclose the C2 domain; that stretch reads ECQDSKVTNQ…FHEVTCELNH (119 aa). 14 residues coordinate Ca(2+): Gly-428, Asp-429, Thr-432, Ala-433, Asp-435, Asn-454, Glu-467, Asp-483, Ala-484, Asp-485, Trp-488, Asp-489, Asp-490, and Asp-491. Cystine bridges form between Cys-496–Cys-509 and Cys-524–Cys-533. N-linked (GlcNAc...) asparagine glycosylation occurs at Asn-548.

The protein belongs to the complement C6/C7/C8/C9 family. As to quaternary structure, monomer, as soluble protein. Homooligomer; homooligomerizes to form a pore-forming ring. Ca(2+) serves as cofactor. In terms of processing, N-glycosylated. The glycosylation sites are facing the interior of the pore. As to expression, detected in cytotoxic T-lymphocytes and natural killer cells.

Its subcellular location is the cytolytic granule. It localises to the secreted. The protein resides in the cell membrane. The protein localises to the endosome lumen. In terms of biological role, pore-forming protein that plays a key role in granzyme-mediated programmed cell death, and in defense against virus-infected or neoplastic cells. Can insert into the membrane of target cells in its calcium-bound form, oligomerize and form large pores. Promotes cytolysis and apoptosis of target cells by mediating the passage and uptake of cytotoxic granzymes. Facilitates the delivery of cationic cargo protein, while anionic or neural proteins are not delivered efficiently. Perforin pores allow the release of mature caspase-7 (CASP7) into the extracellular milieu. In Mus musculus (Mouse), this protein is Perforin-1 (Prf1).